Reading from the N-terminus, the 187-residue chain is Phosphoheptose isomerase (187 aa).

The 154-residue stretch at cysteine 34–phenylalanine 187 folds into the SIS domain. A substrate-binding site is contributed by asparagine 49 to glycine 51. Zn(2+) contacts are provided by histidine 58 and glutamate 62. Residues glutamate 62, asparagine 91–aspartate 92, serine 117–serine 119, serine 122, and glutamine 169 contribute to the substrate site. Zn(2+) contacts are provided by glutamine 169 and histidine 177.

This sequence belongs to the SIS family. GmhA subfamily. Homotetramer. Requires Zn(2+) as cofactor.

It localises to the cytoplasm. The catalysed reaction is 2 D-sedoheptulose 7-phosphate = D-glycero-alpha-D-manno-heptose 7-phosphate + D-glycero-beta-D-manno-heptose 7-phosphate. The protein operates within carbohydrate biosynthesis; D-glycero-D-manno-heptose 7-phosphate biosynthesis; D-glycero-alpha-D-manno-heptose 7-phosphate and D-glycero-beta-D-manno-heptose 7-phosphate from sedoheptulose 7-phosphate: step 1/1. Its function is as follows. Catalyzes the isomerization of sedoheptulose 7-phosphate in D-glycero-D-manno-heptose 7-phosphate. This Nitratiruptor sp. (strain SB155-2) protein is Phosphoheptose isomerase.